The chain runs to 420 residues: Lactosylceramide alpha-2,3-sialyltransferase (420 aa).

The segment at 1–39 is disordered; the sequence is MRKKAAGGAERRPLKPRTEAAAAAPAGRAMPSDHSRMKL. At 1–67 the chain is on the cytoplasmic side; the sequence is MRKKAAGGAE…MRRPNLLLKD (67 aa). Residues 9–18 show a composition bias toward basic and acidic residues; sequence AERRPLKPRT. The segment covering 20–29 has biased composition (low complexity); the sequence is AAAAAPAGRA. The helical transmembrane segment at 68–88 threads the bilayer; sequence ILKCTLLLFGVWILFYILKLN. Over 89-420 the chain is Lumenal; the sequence is HTTEECDMKR…DLSGGIHSEF (332 aa). Cys197 and Cys355 form a disulfide bridge. An N-linked (GlcNAc...) asparagine glycan is attached at Asn238.

This sequence belongs to the glycosyltransferase 29 family.

The protein localises to the golgi apparatus membrane. It catalyses the reaction a beta-D-Gal-(1-&gt;4)-beta-D-Glc-(1&lt;-&gt;1)-Cer(d18:1(4E)) + CMP-N-acetyl-beta-neuraminate = a ganglioside GM3 (d18:1(4E)) + CMP + H(+). The enzyme catalyses ganglioside GA2 (d18:1(4E)/18:0) + CMP-N-acetyl-beta-neuraminate = ganglioside GM2 (d18:1(4E)/18:0) + CMP + H(+). The catalysed reaction is a beta-D-Gal-(1&lt;-&gt;1')-ceramide + CMP-N-acetyl-beta-neuraminate = N-acetyl-alpha-neuraminosyl-(2-&gt;3)-beta-D-galactosyl-(1&lt;-&gt;1')-ceramide + CMP + H(+). It carries out the reaction ganglioside GA1 (d18:1(4E)/18:0) + CMP-N-acetyl-beta-neuraminate = ganglioside GM1 (d18:1(4E)/18:0) + CMP + H(+). Functionally, transfers the sialyl group (N-acetyl-alpha-neuraminyl or NeuAc) from CMP-NeuAc to the non-reducing terminal galactose (Gal) of glycosphingolipids forming gangliosides (important molecules involved in the regulation of multiple cellular processes, including cell proliferation and differentiation, apoptosis, embryogenesis, development, and oncogenesis). Mainly involved in the biosynthesis of ganglioside GM3 but can also use different glycolipids as substrate acceptors such as D-galactosylceramide (GalCer), asialo-GM2 (GA2) and asialo-GM1 (GA1), although less preferentially than beta-D-Gal-(1-&gt;4)-beta-D-Glc-(1&lt;-&gt;1)-Cer (LacCer). The chain is Lactosylceramide alpha-2,3-sialyltransferase (ST3GAL5) from Bos taurus (Bovine).